A 282-amino-acid chain; its full sequence is 1-deoxy-11-beta-hydroxypentalenate dehydrogenase (282 aa).

An NAD(+)-binding site is contributed by 12-36 (GAASGIGLALSARFARAGAGVVMAD). Residue Ser-144 participates in substrate binding. The active-site Proton acceptor is Tyr-157. Lys-161 lines the NAD(+) pocket. The disordered stretch occupies residues 258 to 282 (PPPSPEEELWPVPKTTTATTATTKH). Over residues 267-282 (WPVPKTTTATTATTKH) the composition is skewed to low complexity.

It belongs to the short-chain dehydrogenases/reductases (SDR) family.

The enzyme catalyses 1-deoxy-11beta-hydroxypentalenate + NAD(+) = 1-deoxy-11-oxopentalenate + NADH + H(+). Its pathway is antibiotic biosynthesis; pentalenolactone biosynthesis. Catalyzes the oxidation of 1-deoxy-11-beta-hydroxypentalenic acid to 1-deoxy-11-oxopentalenic acid in the biosynthesis of pentalenolactone antibiotic. The polypeptide is 1-deoxy-11-beta-hydroxypentalenate dehydrogenase (pntF) (Streptomyces arenae).